We begin with the raw amino-acid sequence, 291 residues long: Bis(5'-nucleosyl)-tetraphosphatase, symmetrical (291 aa).

Belongs to the Ap4A hydrolase family.

The enzyme catalyses P(1),P(4)-bis(5'-adenosyl) tetraphosphate + H2O = 2 ADP + 2 H(+). In terms of biological role, hydrolyzes diadenosine 5',5'''-P1,P4-tetraphosphate to yield ADP. In Coxiella burnetii (strain Dugway 5J108-111), this protein is Bis(5'-nucleosyl)-tetraphosphatase, symmetrical.